A 266-amino-acid polypeptide reads, in one-letter code: Vitamin B12-binding protein (266 aa).

Residues 1-22 form the signal peptide; the sequence is MAKQMFRALGALLLTLPVWLYA. The region spanning 25–266 is the Fe/B12 periplasmic-binding domain; it reads RVITLSPANT…QLCNALSQVN (242 aa). Cyanocob(III)alamin contacts are provided by residues Tyr-50 and 242-246; that span reads DWFER. The cysteines at positions 183 and 259 are disulfide-linked.

This sequence belongs to the BtuF family. In terms of assembly, the complex is composed of two ATP-binding proteins (BtuD), two transmembrane proteins (BtuC) and a solute-binding protein (BtuF).

It localises to the periplasm. Functionally, part of the ABC transporter complex BtuCDF involved in vitamin B12 import. Binds vitamin B12 and delivers it to the periplasmic surface of BtuC. The chain is Vitamin B12-binding protein from Salmonella typhi.